The chain runs to 796 residues: Inactive dipeptidyl peptidase 10 (796 aa).

Residues M1–G34 lie on the Cytoplasmic side of the membrane. The segment at M1–L56 is mediates effects on KCND2. The helical; Signal-anchor for type II membrane protein transmembrane segment at I35–L55 threads the bilayer. Topologically, residues L56–E796 are extracellular. N-linked (GlcNAc...) asparagine glycosylation is found at N90, N111, and N119. A phosphotyrosine mark is found at Y138 and Y143. Residues N257, N342, and N748 are each glycosylated (N-linked (GlcNAc...) asparagine).

The protein belongs to the peptidase S9B family. DPPIV subfamily. May form oligomers. Interacts with KCND1. Interacts with KCND2. N-glycosylation is important for cell surface expression, specially at Asn-257, which is crucial. As to expression, found in serum, T-cells and brain (at protein level). Expressed in brain, pancreas, spinal cord and adrenal glands.

The protein resides in the cell membrane. Functionally, promotes cell surface expression of the potassium channel KCND2. Modulates the activity and gating characteristics of the potassium channel KCND2. Has no dipeptidyl aminopeptidase activity. The polypeptide is Inactive dipeptidyl peptidase 10 (DPP10) (Homo sapiens (Human)).